The chain runs to 199 residues: Stress response protein SCP2 (199 aa).

Belongs to the CAPAB/TerDEXZ family.

It localises to the cytoplasm. This is Stress response protein SCP2 (yceC) from Bacillus subtilis (strain 168).